Reading from the N-terminus, the 173-residue chain is Photosystem I assembly protein Ycf3 (173 aa).

3 TPR repeats span residues 35–68, 72–105, and 113–146; these read AFAY…EEDP, SYIL…NPRM, and AVIY…WKRA.

It belongs to the Ycf3 family.

The protein localises to the cellular thylakoid membrane. In terms of biological role, essential for the assembly of the photosystem I (PSI) complex. May act as a chaperone-like factor to guide the assembly of the PSI subunits. The chain is Photosystem I assembly protein Ycf3 from Thermosynechococcus vestitus (strain NIES-2133 / IAM M-273 / BP-1).